The following is a 1096-amino-acid chain: MGEVKSVKVDNWGVFFLQKLQNFFNKTDYCDLTLQFRDNSQLKVHRLVLSACTDYFNVLEQTCEIVDDALIMPNEFQADVVVPIVNFMYTGTLEFELKMYGKLLRTAKEMNMTVLLKLLEAHRRTMENVNRQQRPPSPKGIRRRTVGQPSSGLPQQRVLGPSPQSRNVATPIAQRANTQRGSTGNTMSRTSGGSNRSPYGDSSNVKQEPTSPFEQLRKGYNNNKRPAQTSLLSPPSKKPSLEEVKEFAEQQRMRKQIAAEYGDNDPEYDGGMLYDDVHAGDDDDDDMPPQPSTSKQQSPQGTQTQLEHGSTTIILKQDSPSQTPTIIVKDSSNAKLNHTKIIAEVLRQYPHIVKGHKNIKLKIMPNTPAAPTEKSAPATVKPPANQSSATTSPHKKLHVSFKADKSTPLITAQQKAASSQQKSGTSQTTGNQGTGANPPANTAAAQKRRIDSKTMHALIAQGAENTTGPWLCLRCGVNGRPISIPSYRGFRRHLINTHKETIDPALCEHCGWRSVNNRELHFHMYMEHQTKSLLYTFAECALCNQSYRTKGELEAHINEVHTDDNKQQCIYCNKVFEQELQLYRHMKSYHKEQALEDGIIDETDEEFLGSQDEEEEAEGDEEQEPEQTGKVRILSDISLPATSAITVQQAQQEQLQEEDVEQVQQEVKFVGADGNEVELTDEQRKEILSQLNQQQAGATAGGVVMVLSEPEAEHVKQETDEKSLAGTEEEYDDSQIYSELGAADSVESAKKNIADESKESIDNLEWAENLIAESEEQSNKEPKSDKPRDDISEKLKELTGDWTEDENDDDVDDKPATAELASELANKDPEPTVHEEEDDIDLALQSLHKGPEEATEEKASEESVTSADDAVDAVPNINSQPEKMDVDSEAADEKASKAEVQIKKEAELENDQEEFIKEDSPIPHSDSVAELREAVTASEGEDDVHLEADNIRKELLDELIAEAEKPDQEKDIVQSEENATTEALDRSVTDEDDLVPPTQVSTEQMEIDEPAAEKAAENNEDTRTADEKEAVEDKPNQTQDVTTAEKPTLESAKAGDEATSGEAASVDKVKSLISEWGDDDEDEDENGVSAAAKEEL.

The segment at methionine 1–proline 209 is involved in microtubule and centrosome binding. Residues cysteine 30–leucine 97 form the BTB domain. Positions methionine 126–histidine 308 are disordered. Polar residues-rich tracts occupy residues arginine 175 to phenylalanine 213 and tyrosine 220 to serine 230. A phosphoserine mark is found at serine 197 and serine 211. The nuclear localization stretch occupies residues glutamine 207–glycine 271. Residues threonine 210–lysine 245 are involved in interaction with cliff. Threonine 229 carries the phosphothreonine modification. At serine 233 the chain carries Phosphoserine. The span at proline 239 to arginine 252 shows a compositional bias: basic and acidic residues. Residues lysine 245 to glycine 468 form a centrosomal targeting M domain involved in interaction with ZIPIC region. Over residues serine 292–glutamine 305 the composition is skewed to low complexity. Phosphoserine occurs at positions 298 and 319. The involved in interaction with cliff stretch occupies residues glycine 309 to threonine 390. Residues asparagine 366–arginine 449 are disordered. Positions asparagine 385–glutamate 508 are centrosomal localization and interaction with microtubules. Positions alanine 412–alanine 445 are enriched in low complexity. C2H2-type zinc fingers lie at residues alanine 538 to histidine 561 and glutamine 567 to histidine 590. At threonine 603 the chain carries Phosphothreonine. Residues leucine 608–proline 625 show a composition bias toward acidic residues. The disordered stretch occupies residues leucine 608–lysine 630. Serine 610, serine 708, and serine 723 each carry phosphoserine. Residues proline 710–aspartate 733 are disordered. Positions glutamate 711 to serine 723 are enriched in basic and acidic residues. Phosphothreonine is present on threonine 727. Phosphoserine is present on residues serine 745, serine 748, serine 757, and serine 760. A disordered region spans residues leucine 770–serine 927. Residues glutamine 777 to threonine 799 show a composition bias toward basic and acidic residues. The span at tryptophan 802–aspartate 812 shows a compositional bias: acidic residues. Threonine 817 carries the phosphothreonine modification. 4 stretches are compositionally biased toward basic and acidic residues: residues alanine 825–histidine 834, lysine 849–glutamate 861, glutamate 882–glutamate 907, and glutamate 914–serine 927. Residues serine 920, serine 925, and serine 927 each carry the phosphoserine modification. Phosphothreonine is present on threonine 936. Position 938 is a phosphoserine (serine 938). Basic and acidic residues-rich tracts occupy residues isoleucine 960 to valine 973 and alanine 1011 to proline 1035. The disordered stretch occupies residues isoleucine 960 to leucine 1096. Phosphoserine occurs at positions 1071 and 1074. Acidic residues predominate over residues tryptophan 1076–asparagine 1086.

As to quaternary structure, homodimerizes via the N-terminal BTB domain. Component of the gypsy chromatin insulator complex, composed of Cp190, mod(mdg4) and su(Hw). The gypsy chromatin insulator complex interacts with Topors via mod(mdg4) and su(Hw). Interacts with Cp60. Interacts with inv. Interacts with Nup98. Interacts (via BTB domain) with pita (via region between the ZAD domain and the first zinc finger domain); the interaction is direct. Interacts with ZIPIC (via region between the ZAD domain and the first zinc finger domain); the interaction is direct. Interacts (via regions between the BTB domain and first zinc finger domain) with cliff (via regions flanking MADF domain 1); the interaction is probably direct. Associates (via N-terminus) with microtubules; the interaction is direct, is enhanced by dimerization and involves multiple regions within the N-terminus. Microtubule association is enriched at growing plus ends. As to expression, expressed in spermatids but not in mature spermatozoa. Localizes within the spermatids to a sheath of microtubules around the nucleus and to microtubules within the tail.

Its subcellular location is the nucleus. It localises to the cytoplasm. The protein resides in the cytoskeleton. It is found in the microtubule organizing center. The protein localises to the centrosome. Its subcellular location is the chromosome. It localises to the nucleoplasm. In terms of biological role, plays a central role in chromatin domain organization and boundary function through recruitment by a range of insulator DNA-binding proteins, including ZIPIC, pita, CTCF, su(Hw), cliff and others. Together with pita and CTCF cooperatively binds to and regulates the activity of the Miscadastral pigmentation (MCP) insulator. Cooperatively recruited to the front-ultraabdominal (Fub) boundary by pita, su(Hw) and cliff. Recruitment of Cp190 together with Chro/chromator induces chromatin decondensation. Component of the gypsy chromatin insulator complex which is required for the function of the gypsy chromatin insulator and other endogenous chromatin insulators. Chromatin insulators are regulatory elements that establish independent domains of transcriptional activity within eukaryotic genomes. Insulators have two defining properties; they can block the communication between an enhancer and a promoter when placed between them and can also buffer transgenes from position effect variegation (PEV). Insulators are proposed to structure the chromatin fiber into independent domains of differing transcriptional potential by promoting the formation of distinct chromatin loops to form topologically associating domains (TADs). This chromatin looping may involve the formation of insulator bodies, where homotypic interactions between individual subunits of the insulator complex could promote the clustering of widely spaced insulators at the nuclear periphery. Within the gypsy insulator complex, this protein may directly bind to insulator DNA at sites distinct from those recognized by su(Hw). Required during embryogenesis for axial expansion, an actin/myosin dependent process that distributes the dividing nuclei along the anterior-posterior axis of the syncytial embryo. Associates with centrosomes and interphase microtubules during mitosis, and recruits CP60; may have a role in maintaining centrosome and spindle integrity. This chain is Centrosome-associated zinc finger protein Cp190, found in Drosophila melanogaster (Fruit fly).